Consider the following 659-residue polypeptide: DNA mismatch repair protein MutL (659 aa).

The disordered stretch occupies residues 338 to 459 (GAPRGASKPG…DTTSERDSLP (122 aa)). Positions 352-362 (SPEHSPTDRDA) are enriched in basic and acidic residues. Polar residues predominate over residues 374–391 (SDGNGQRTAASGATSESP).

This sequence belongs to the DNA mismatch repair MutL/HexB family.

This protein is involved in the repair of mismatches in DNA. It is required for dam-dependent methyl-directed DNA mismatch repair. May act as a 'molecular matchmaker', a protein that promotes the formation of a stable complex between two or more DNA-binding proteins in an ATP-dependent manner without itself being part of a final effector complex. The sequence is that of DNA mismatch repair protein MutL from Halobacterium salinarum (strain ATCC 29341 / DSM 671 / R1).